The sequence spans 342 residues: Anthranilate phosphoribosyltransferase (342 aa).

5-phospho-alpha-D-ribose 1-diphosphate contacts are provided by residues glycine 80, glycine 83–aspartate 84, threonine 88, asparagine 90–threonine 93, lysine 108–serine 116, and serine 120. Anthranilate is bound at residue glycine 80. Residue serine 92 participates in Mg(2+) binding. Asparagine 111 provides a ligand contact to anthranilate. Arginine 166 lines the anthranilate pocket. Residues aspartate 225 and glutamate 226 each coordinate Mg(2+).

This sequence belongs to the anthranilate phosphoribosyltransferase family. Homodimer. The cofactor is Mg(2+).

It carries out the reaction N-(5-phospho-beta-D-ribosyl)anthranilate + diphosphate = 5-phospho-alpha-D-ribose 1-diphosphate + anthranilate. It functions in the pathway amino-acid biosynthesis; L-tryptophan biosynthesis; L-tryptophan from chorismate: step 2/5. Catalyzes the transfer of the phosphoribosyl group of 5-phosphorylribose-1-pyrophosphate (PRPP) to anthranilate to yield N-(5'-phosphoribosyl)-anthranilate (PRA). This is Anthranilate phosphoribosyltransferase from Halalkalibacterium halodurans (strain ATCC BAA-125 / DSM 18197 / FERM 7344 / JCM 9153 / C-125) (Bacillus halodurans).